The chain runs to 435 residues: GTPase Der (435 aa).

2 EngA-type G domains span residues 4-167 and 175-350; these read KIVA…SKND and TKIA…QSLS. GTP is bound by residues 10-17, 57-61, 119-122, 181-188, 228-232, and 293-296; these read GRPNVGKS, DTGGI, NKYD, DTAGI, and NKWD. Positions 351 to 435 constitute a KH-like domain; the sequence is VKVKTYVLNE…PINLIFRERK (85 aa).

Belongs to the TRAFAC class TrmE-Era-EngA-EngB-Septin-like GTPase superfamily. EngA (Der) GTPase family. In terms of assembly, associates with the 50S ribosomal subunit.

In terms of biological role, GTPase that plays an essential role in the late steps of ribosome biogenesis. This chain is GTPase Der, found in Mycoplasma mycoides subsp. mycoides SC (strain CCUG 32753 / NCTC 10114 / PG1).